A 415-amino-acid chain; its full sequence is Enolase (415 aa).

Residue Gln161 participates in (2R)-2-phosphoglycerate binding. Glu203 acts as the Proton donor in catalysis. Residues Asp240, Glu281, and Asp308 each contribute to the Mg(2+) site. Residues Lys333, Arg362, Ser363, and Lys384 each contribute to the (2R)-2-phosphoglycerate site. Catalysis depends on Lys333, which acts as the Proton acceptor.

This sequence belongs to the enolase family. Mg(2+) is required as a cofactor.

It localises to the cytoplasm. It is found in the secreted. Its subcellular location is the cell surface. The catalysed reaction is (2R)-2-phosphoglycerate = phosphoenolpyruvate + H2O. The protein operates within carbohydrate degradation; glycolysis; pyruvate from D-glyceraldehyde 3-phosphate: step 4/5. Catalyzes the reversible conversion of 2-phosphoglycerate (2-PG) into phosphoenolpyruvate (PEP). It is essential for the degradation of carbohydrates via glycolysis. The chain is Enolase from Campylobacter hominis (strain ATCC BAA-381 / DSM 21671 / CCUG 45161 / LMG 19568 / NCTC 13146 / CH001A).